A 412-amino-acid polypeptide reads, in one-letter code: Putative competence-damage inducible protein (412 aa).

The protein belongs to the CinA family.

In Bacillus cereus (strain ATCC 14579 / DSM 31 / CCUG 7414 / JCM 2152 / NBRC 15305 / NCIMB 9373 / NCTC 2599 / NRRL B-3711), this protein is Putative competence-damage inducible protein.